Consider the following 86-residue polypeptide: Cell division topological specificity factor (86 aa).

It belongs to the MinE family.

Prevents the cell division inhibition by proteins MinC and MinD at internal division sites while permitting inhibition at polar sites. This ensures cell division at the proper site by restricting the formation of a division septum at the midpoint of the long axis of the cell. This is Cell division topological specificity factor from Shewanella frigidimarina (strain NCIMB 400).